Reading from the N-terminus, the 465-residue chain is MTSMASLFSFTSPAVKRLLGWKQGDEEEKWAEKAVDALVKKLKKKKGAMEELEKALSSPGQPSKCVTIPRSLDGRLQVSHRKGLPHVIYCRVWRWPDLQSHHELKPLDICEFPFGSKQKEVCINPYHYKRVESPVLPPVLVPRHNEFNPQHSLLVQFRNLSHNEPHMPQNATFPDSFHQPNSTPFPLSPNSPYPPSPASSTYPNSPASSGPGSPFQLPADTPPPAYMPPDDQMGQDNSQPMDTSNNMIPQIMPSISSRDVQPVAYEEPKHWCSIVYYELNNRVGEAFHASSTSVLVDGFTDPANNKSRFCLGLLSNVNRNSTIENTRRHIGKGVHLYYVGGEVYAECLSDSSIFVQSRNCNFHHGFHPTTVCKIPSSCSLKIFNNQEFAQLLAQSVNHGFEAVYELTKMCTIRMSFVKGWGAEYHRQDVTSTPCWIEIHLHGPLQWLDKVLTQMGSPLNPISSVS.

T2 is subject to N-acetylthreonine. One can recognise an MH1 domain in the interval 13 to 137 (PAVKRLLGWK…YKRVESPVLP (125 aa)). 4 residues coordinate Zn(2+): C65, C110, C122, and H127. The tract at residues 163–243 (NEPHMPQNAT…GQDNSQPMDT (81 aa)) is disordered. Residues 169-182 (QNATFPDSFHQPNS) show a composition bias toward polar residues. Residues 186-197 (PLSPNSPYPPSP) show a composition bias toward pro residues. Over residues 198–214 (ASSTYPNSPASSGPGSP) the composition is skewed to low complexity. Over residues 234-243 (GQDNSQPMDT) the composition is skewed to polar residues. The MH2 domain occupies 271-465 (WCSIVYYELN…SPLNPISSVS (195 aa)). 2 positions are modified to phosphoserine: S463 and S465.

This sequence belongs to the dwarfin/SMAD family. As to quaternary structure, homodimer. Forms trimers with the co-SMAD SMAD4. Interacts with PEBP2-alpha subunit and SMURF1. Interacts with SUV39H1 and SUV39H2. Interacts (via MH2 domain) with LEMD3. Interacts with WWP1. Interacts with TMEM119. Interacts with ZNF8. Interacts with RANBP3L. Interacts with HK1. Interacts with HGS; this interaction attenuates BMP signaling. Post-translationally, phosphorylated on serine by BMP (bone morphogenetic proteins) type 1 receptor kinase. In terms of processing, ubiquitin-mediated proteolysis by SMAD-specific E3 ubiquitin ligase SMURF1.

The protein localises to the cytoplasm. The protein resides in the nucleus. It localises to the mitochondrion. In terms of biological role, transcriptional regulator that plays a role in various cellular processes including embryonic development, cell differentiation, angiogenesis and tissue homeostasis. Upon BMP ligand binding to their receptors at the cell surface, is phosphorylated by activated type I BMP receptors (BMPRIs) and associates with SMAD4 to form a heteromeric complex which translocates into the nucleus acting as transcription factor. In turn, the hetero-trimeric complex recognizes cis-regulatory elements containing Smad Binding Elements (SBEs) to modulate the outcome of the signaling network. Non-phosphorylated SMAD5 has a cytoplasmic role in energy metabolism regulation by promoting mitochondrial respiration and glycolysis in response to cytoplasmic pH changes. Mechanistically, interacts with hexokinase 1/HK1 and thereby accelerates glycolysis. The chain is Mothers against decapentaplegic homolog 5 (Smad5) from Rattus norvegicus (Rat).